Reading from the N-terminus, the 266-residue chain is Elongation factor Ts (266 aa).

The interval 80-83 (TDFV) is involved in Mg(2+) ion dislocation from EF-Tu.

This sequence belongs to the EF-Ts family.

It localises to the cytoplasm. Associates with the EF-Tu.GDP complex and induces the exchange of GDP to GTP. It remains bound to the aminoacyl-tRNA.EF-Tu.GTP complex up to the GTP hydrolysis stage on the ribosome. This Buchnera aphidicola subsp. Baizongia pistaciae (strain Bp) protein is Elongation factor Ts.